Consider the following 112-residue polypeptide: Large ribosomal subunit protein uL22 (112 aa).

The protein belongs to the universal ribosomal protein uL22 family. Part of the 50S ribosomal subunit.

This protein binds specifically to 23S rRNA; its binding is stimulated by other ribosomal proteins, e.g. L4, L17, and L20. It is important during the early stages of 50S assembly. It makes multiple contacts with different domains of the 23S rRNA in the assembled 50S subunit and ribosome. In terms of biological role, the globular domain of the protein is located near the polypeptide exit tunnel on the outside of the subunit, while an extended beta-hairpin is found that lines the wall of the exit tunnel in the center of the 70S ribosome. The chain is Large ribosomal subunit protein uL22 from Anaplasma marginale (strain Florida).